The following is a 37-amino-acid chain: Large ribosomal subunit protein bL36c (37 aa).

The protein belongs to the bacterial ribosomal protein bL36 family.

The protein resides in the plastid. The protein localises to the chloroplast. This is Large ribosomal subunit protein bL36c from Gracilaria tenuistipitata var. liui (Red alga).